Here is a 1140-residue protein sequence, read N- to C-terminus: Eukaryotic translation initiation factor 3 subunit A (1140 aa).

Residues 319 to 501 (LQRMAAHVLL…NSIYFGTDLT (183 aa)) form the PCI domain. 2 stretches are compositionally biased toward basic and acidic residues: residues 588 to 623 (QNNA…EERE) and 829 to 899 (AAEE…RGGD). Disordered stretches follow at residues 588-630 (QNNA…HQNE) and 829-1140 (AAEE…VKRR). A Phosphoserine modification is found at Ser908. Composition is skewed to basic and acidic residues over residues 920 to 976 (ERND…EPDS), 990 to 1051 (SRDD…EPQR), 1059 to 1086 (DAPR…RGDQ), and 1109 to 1130 (TREE…KAGD).

Belongs to the eIF-3 subunit A family. Component of the eukaryotic translation initiation factor 3 (eIF-3) complex. The eIF-3 complex interacts with pix.

Its subcellular location is the cytoplasm. Functionally, RNA-binding component of the eukaryotic translation initiation factor 3 (eIF-3) complex, which is involved in protein synthesis of a specialized repertoire of mRNAs and, together with other initiation factors, stimulates binding of mRNA and methionyl-tRNAi to the 40S ribosome. The eIF-3 complex specifically targets and initiates translation of a subset of mRNAs involved in cell proliferation. The protein is Eukaryotic translation initiation factor 3 subunit A of Drosophila melanogaster (Fruit fly).